We begin with the raw amino-acid sequence, 65 residues long: Large ribosomal subunit protein uL29 (65 aa).

It belongs to the universal ribosomal protein uL29 family.

This is Large ribosomal subunit protein uL29 from Lactobacillus acidophilus (strain ATCC 700396 / NCK56 / N2 / NCFM).